Reading from the N-terminus, the 635-residue chain is ATP-dependent zinc metalloprotease FtsH (635 aa).

Residues 1-6 (MNNQGR) are Cytoplasmic-facing. The chain crosses the membrane as a helical span at residues 7–27 (SILTWAALFVFVILLFNVFQS). Residues 28–103 (DGLLGGRNNI…VVPLETRMNT (76 aa)) are Periplasmic-facing. A helical transmembrane segment spans residues 104–124 (FLGFLISWFPMLLLIGVWVFF). Topologically, residues 125-635 (MRQMHGGGKA…KKAKKESTNI (511 aa)) are cytoplasmic. 195-202 (GPPGTGKT) is an ATP binding site. His417 lines the Zn(2+) pocket. Glu418 is a catalytic residue. The Zn(2+) site is built by His421 and Asp495. The tract at residues 600-635 (SEEENKFPFNDSPTIKIDKEKSPEKAKKAKKESTNI) is disordered. The span at 615-635 (KIDKEKSPEKAKKAKKESTNI) shows a compositional bias: basic and acidic residues.

It in the central section; belongs to the AAA ATPase family. In the C-terminal section; belongs to the peptidase M41 family. In terms of assembly, homohexamer. The cofactor is Zn(2+).

It localises to the cell inner membrane. Its function is as follows. Acts as a processive, ATP-dependent zinc metallopeptidase for both cytoplasmic and membrane proteins. Plays a role in the quality control of integral membrane proteins. The sequence is that of ATP-dependent zinc metalloprotease FtsH from Rickettsia felis (strain ATCC VR-1525 / URRWXCal2) (Rickettsia azadi).